The primary structure comprises 280 residues: Dual adapter for phosphotyrosine and 3-phosphotyrosine and 3-phosphoinositide (280 aa).

Positions 35-129 (WYHGNLTRHA…GTLMVLKHPY (95 aa)) constitute an SH2 domain. Residue Y139 is modified to Phosphotyrosine. The residue at position 141 (S141) is a Phosphoserine. The region spanning 164-259 (LGTKEGYLTK…WIKILRWKLS (96 aa)) is the PH domain.

Interacts with PtdIns(3,4,5)P3 and PLCG2. In terms of processing, phosphorylated on tyrosine residues.

It localises to the cytoplasm. The protein localises to the membrane. May act as a B-cell-associated adapter that regulates B-cell antigen receptor (BCR)-signaling downstream of PI3K. In Mus musculus (Mouse), this protein is Dual adapter for phosphotyrosine and 3-phosphotyrosine and 3-phosphoinositide (Dapp1).